We begin with the raw amino-acid sequence, 541 residues long: MPTDLQAWNALRQHHDVVRETPMQQWFAEAGAAQRVDAFSLEASGLYLDYSKNRITGETLALLMKLAEEAGVPARRDAMFAGEHINATEDRAALHVALRALPDAPFKVDGASVMPAIHDVLRRMREFAGRVRSGVWTGSTGQGITDIVNIGIGGSDLGPRMVCRALAHLADPRGPRVHFVSNVDGTELAETLQRLDPARTLAIVCSKTFTTLETMANACSMRDWFLRHGVAENQLARHFVAVSTNRDAVVDFGIDPNNMFEFWDWIGGRFSLWSSVGLSIALAVGFDAFEDLLLGARAMDDHFRTAPLAQNMPVVMAMLGIWYRNFHDMPTSCMAPYSTSLELFPAFLQQLEMESNGKSVQLDGRPVDADTAPVVWGTAGTNGQHAYFQMIHQGSQIVPVDFVAPLVPPRELPGHHVKLLANCFAQAEALMRGRSAEELQAAGVDAARIPHMVFEGNRPSNMLLMENLTPHVLGALIALYEHRTFVQGIVWNINSFDQWGVELGKILARPIEAELSGNATEAHDASTAALIARARRSLARS.

Glutamate 354 (proton donor) is an active-site residue. Catalysis depends on residues histidine 385 and lysine 505.

The protein belongs to the GPI family.

The protein localises to the cytoplasm. The catalysed reaction is alpha-D-glucose 6-phosphate = beta-D-fructose 6-phosphate. It participates in carbohydrate biosynthesis; gluconeogenesis. It functions in the pathway carbohydrate degradation; glycolysis; D-glyceraldehyde 3-phosphate and glycerone phosphate from D-glucose: step 2/4. Functionally, catalyzes the reversible isomerization of glucose-6-phosphate to fructose-6-phosphate. The polypeptide is Glucose-6-phosphate isomerase (Cupriavidus metallidurans (strain ATCC 43123 / DSM 2839 / NBRC 102507 / CH34) (Ralstonia metallidurans)).